A 251-amino-acid polypeptide reads, in one-letter code: 2,3-bisphosphoglycerate-dependent phosphoglycerate mutase (251 aa).

Residues 11 to 18, 24 to 25, R63, 90 to 93, K101, 117 to 118, and 184 to 185 contribute to the substrate site; these read RHGESDWN, TG, ERHY, RR, and GN. Residue H12 is the Tele-phosphohistidine intermediate of the active site. Residue E90 is the Proton donor/acceptor of the active site.

The protein belongs to the phosphoglycerate mutase family. BPG-dependent PGAM subfamily.

It catalyses the reaction (2R)-2-phosphoglycerate = (2R)-3-phosphoglycerate. It participates in carbohydrate degradation; glycolysis; pyruvate from D-glyceraldehyde 3-phosphate: step 3/5. Functionally, catalyzes the interconversion of 2-phosphoglycerate and 3-phosphoglycerate. This chain is 2,3-bisphosphoglycerate-dependent phosphoglycerate mutase, found in Mycobacterium ulcerans (strain Agy99).